The chain runs to 331 residues: DNA-directed RNA polymerase subunit alpha (331 aa).

The alpha N-terminal domain (alpha-NTD) stretch occupies residues 1–226 (MLIAQRPTLT…ELFGLCRELN (226 aa)). An alpha C-terminal domain (alpha-CTD) region spans residues 243–331 (TNPEMAVPIE…GGTFFSPEDE (89 aa)).

The protein belongs to the RNA polymerase alpha chain family. In terms of assembly, homodimer. The RNAP catalytic core consists of 2 alpha, 1 beta, 1 beta' and 1 omega subunit. When a sigma factor is associated with the core the holoenzyme is formed, which can initiate transcription.

It carries out the reaction RNA(n) + a ribonucleoside 5'-triphosphate = RNA(n+1) + diphosphate. DNA-dependent RNA polymerase catalyzes the transcription of DNA into RNA using the four ribonucleoside triphosphates as substrates. The chain is DNA-directed RNA polymerase subunit alpha from Bifidobacterium longum (strain NCC 2705).